Reading from the N-terminus, the 273-residue chain is Bifunctional protein FolD (273 aa).

Residues 149–151 (GLG) and Val-215 contribute to the NADP(+) site.

This sequence belongs to the tetrahydrofolate dehydrogenase/cyclohydrolase family. As to quaternary structure, homodimer.

It catalyses the reaction (6R)-5,10-methylene-5,6,7,8-tetrahydrofolate + NADP(+) = (6R)-5,10-methenyltetrahydrofolate + NADPH. It carries out the reaction (6R)-5,10-methenyltetrahydrofolate + H2O = (6R)-10-formyltetrahydrofolate + H(+). Its pathway is one-carbon metabolism; tetrahydrofolate interconversion. Its function is as follows. Catalyzes the oxidation of 5,10-methylenetetrahydrofolate to 5,10-methenyltetrahydrofolate and then the hydrolysis of 5,10-methenyltetrahydrofolate to 10-formyltetrahydrofolate. The sequence is that of Bifunctional protein FolD from Mycoplasma genitalium (strain ATCC 33530 / DSM 19775 / NCTC 10195 / G37) (Mycoplasmoides genitalium).